A 418-amino-acid chain; its full sequence is Tryptophan synthase beta chain 1 (418 aa).

At K99 the chain carries N6-(pyridoxal phosphate)lysine.

Belongs to the TrpB family. As to quaternary structure, tetramer of two alpha and two beta chains. The cofactor is pyridoxal 5'-phosphate.

The enzyme catalyses (1S,2R)-1-C-(indol-3-yl)glycerol 3-phosphate + L-serine = D-glyceraldehyde 3-phosphate + L-tryptophan + H2O. It functions in the pathway amino-acid biosynthesis; L-tryptophan biosynthesis; L-tryptophan from chorismate: step 5/5. Its function is as follows. The beta subunit is responsible for the synthesis of L-tryptophan from indole and L-serine. The polypeptide is Tryptophan synthase beta chain 1 (trpB1) (Corynebacterium efficiens (strain DSM 44549 / YS-314 / AJ 12310 / JCM 11189 / NBRC 100395)).